The primary structure comprises 148 residues: Lysozyme C-1 (148 aa).

Residues 1 to 18 (MKALLVLGFLLLSASVQA) form the signal peptide. Positions 19-148 (KIYERCQFAR…LSGYIRNCGV (130 aa)) constitute a C-type lysozyme domain. Intrachain disulfides connect C24/C146, C48/C134, C83/C99, and C95/C113. Active-site residues include E53 and D71.

Belongs to the glycosyl hydrolase 22 family. As to quaternary structure, monomer. As to expression, expressed in lung, small intestine and spleen.

It is found in the secreted. It carries out the reaction Hydrolysis of (1-&gt;4)-beta-linkages between N-acetylmuramic acid and N-acetyl-D-glucosamine residues in a peptidoglycan and between N-acetyl-D-glucosamine residues in chitodextrins.. In terms of biological role, lysozymes have primarily a bacteriolytic function; those in tissues and body fluids are associated with the monocyte-macrophage system and enhance the activity of immunoagents. In the intestine they may also have a digestive function. The protein is Lysozyme C-1 (Lyz1) of Rattus norvegicus (Rat).